Consider the following 107-residue polypeptide: uncharacterized protein (107 aa).

Over residues 1 to 14 (MTERNASGRMNTKG) the composition is skewed to polar residues. Residues 1–20 (MTERNASGRMNTKGRSIKET) are disordered.

The protein resides in the mitochondrion. This is an uncharacterized protein from Arabidopsis thaliana (Mouse-ear cress).